A 383-amino-acid polypeptide reads, in one-letter code: uncharacterized protein (383 aa).

It belongs to the peptidase M20 family.

This is an uncharacterized protein from Staphylococcus epidermidis (strain ATCC 35984 / DSM 28319 / BCRC 17069 / CCUG 31568 / BM 3577 / RP62A).